The sequence spans 266 residues: Na(+)-translocating NADH-quinone reductase subunit C (266 aa).

The chain crosses the membrane as a helical span at residues 16–36 (LLVVVILCLVCSVVVAGAAVG). Thr232 bears the FMN phosphoryl threonine mark.

Belongs to the NqrC family. In terms of assembly, composed of six subunits; NqrA, NqrB, NqrC, NqrD, NqrE and NqrF. FMN is required as a cofactor.

Its subcellular location is the cell inner membrane. The enzyme catalyses a ubiquinone + n Na(+)(in) + NADH + H(+) = a ubiquinol + n Na(+)(out) + NAD(+). Its function is as follows. NQR complex catalyzes the reduction of ubiquinone-1 to ubiquinol by two successive reactions, coupled with the transport of Na(+) ions from the cytoplasm to the periplasm. NqrA to NqrE are probably involved in the second step, the conversion of ubisemiquinone to ubiquinol. In Yersinia pestis, this protein is Na(+)-translocating NADH-quinone reductase subunit C.